Consider the following 316-residue polypeptide: Glycine--tRNA ligase alpha subunit (316 aa).

It belongs to the class-II aminoacyl-tRNA synthetase family. Tetramer of two alpha and two beta subunits.

The protein localises to the cytoplasm. The catalysed reaction is tRNA(Gly) + glycine + ATP = glycyl-tRNA(Gly) + AMP + diphosphate. This is Glycine--tRNA ligase alpha subunit from Cupriavidus taiwanensis (strain DSM 17343 / BCRC 17206 / CCUG 44338 / CIP 107171 / LMG 19424 / R1) (Ralstonia taiwanensis (strain LMG 19424)).